The chain runs to 581 residues: Nicotinic acid-CoA ligase pyr1 (581 aa).

204–215 (MFLTSGTSGLPK) lines the AMP pocket. An AMP-binding region spans residues 477–555 (EIEGILLKDP…DEIPRTGIGK (79 aa)).

Belongs to the ATP-dependent AMP-binding enzyme family.

The catalysed reaction is nicotinate + ATP + CoA = nicotinyl-CoA + AMP + diphosphate. The protein operates within secondary metabolite biosynthesis; terpenoid biosynthesis. Functionally, nicotinic acid-CoA ligase; part of the gene cluster that mediates the biosynthesis of pyripyropene A, a specific human acyl-coenzyme A:cholesterol acyltransferase 2 inhibitor. The first step of the pathway is the synthesis of nicotinyl-CoA from nicotinic acid by the nicotinic acid-CoA ligase pyr1. Nicotinyl-CoA is then a substrate of polyketide synthase pyr2 to produce 4-hydroxy-6-(3-pyridinyl)-2H-pyran-2-one (HPPO) which is further prenylated by the polyprenyl transferase pyr6 to yield farnesyl-HPPO. The next steps consist of an epoxidation of farnesyl-HPPO to epoxyfarnesyl-HPPO by FAD-dependent monooxygenase pyr5 and a cyclization of the terpenoid portion by the terpene cyclase pyr4 to yield deacetyl-pyripyropene E. The 2 cytochrome P450 monooxygenases pyr3 and pyr9, and the 2 acetyltransferases pyr7 and pyr8 are involved in the conversion of deacetyl-pyripyropene E into pyripyropene A through several cycles of oxidation and acetylation steps. Pyr7 acetylates deacetyl-pyripyropene E to pyripyropene E which is oxidized to 11-deacetyl-pyripyropene O by pyr3, which is in turn acetylated into pyripyropene O by pyr8. Pyripyropene O is then oxidized to deacetyl-pyripyropene A by pyr9. Deacetyl-pyripyropene A is finally acetylated to pyripyropene A by pyr8. This is Nicotinic acid-CoA ligase pyr1 from Aspergillus fumigatus (strain ATCC MYA-4609 / CBS 101355 / FGSC A1100 / Af293) (Neosartorya fumigata).